A 505-amino-acid polypeptide reads, in one-letter code: Glutamate--tRNA ligase (505 aa).

The short motif at 12–22 (PSPTGPLHIGG) is the 'HIGH' region element. The short motif at 260–264 (KLSKR) is the 'KMSKS' region element. ATP is bound at residue Lys-263.

The protein belongs to the class-I aminoacyl-tRNA synthetase family. Glutamate--tRNA ligase type 1 subfamily. In terms of assembly, monomer.

The protein resides in the cytoplasm. It catalyses the reaction tRNA(Glu) + L-glutamate + ATP = L-glutamyl-tRNA(Glu) + AMP + diphosphate. Catalyzes the attachment of glutamate to tRNA(Glu) in a two-step reaction: glutamate is first activated by ATP to form Glu-AMP and then transferred to the acceptor end of tRNA(Glu). The protein is Glutamate--tRNA ligase of Porphyromonas gingivalis (strain ATCC BAA-308 / W83).